Consider the following 448-residue polypeptide: MKKTLRFAAVASGLVASLITVAPSASAQALRAQGASLADEVVAVVNNDVITGRELDQRVGLIARRLQQQKAPVPPTDQLRAQVLNQMVLERIQVQRAKDDGIVVDNATVQATLGRLAQANGMQLDQYKARIEAQGVPWDLFVRDARTELMLSKLREKEVDSKITVSDAEVASYIASQRGPNAGSQQDLRLEHIFVKAPANAPQADIDVAQKKAEGLLQQALASGANFERLAKNQSEADDAKKGGDLGFKSPASLPSDVVDAVSKLRPGEVNPTLIRVPDGFEIVRLVERRASQNPAASPKIVQTHVRHILLRVGEGKSESQARQQLIDIRRQIESGGDFEKFARTYSQDGSASQGGDLGWISPGEPVPEFERAMNTLQDGQVSNPVRTEYGYHLIQVLGRRDAEGSVQQQMDIARQAIGQRKAEQAYSDWLRELRDSSYVQIKLPVAQ.

Positions 1-27 (MKKTLRFAAVASGLVASLITVAPSASA) are cleaved as a signal peptide. PpiC domains lie at 185–288 (QQDL…RLVE) and 301–399 (IVQT…QVLG).

The protein resides in the periplasm. It catalyses the reaction [protein]-peptidylproline (omega=180) = [protein]-peptidylproline (omega=0). Its function is as follows. Chaperone involved in the correct folding and assembly of outer membrane proteins. Recognizes specific patterns of aromatic residues and the orientation of their side chains, which are found more frequently in integral outer membrane proteins. May act in both early periplasmic and late outer membrane-associated steps of protein maturation. The chain is Chaperone SurA from Burkholderia mallei (strain ATCC 23344).